The primary structure comprises 547 residues: Chaperonin GroEL (547 aa).

Residues 30–33 (TLGP), K51, 87–91 (DGTTT), G415, and D496 each bind ATP. The tract at residues 528-547 (DKSDMPAMPPGGMGGMGGMY) is disordered. A compositionally biased stretch (gly residues) spans 538–547 (GGMGGMGGMY).

The protein belongs to the chaperonin (HSP60) family. As to quaternary structure, forms a cylinder of 14 subunits composed of two heptameric rings stacked back-to-back. Interacts with the co-chaperonin GroES.

Its subcellular location is the cytoplasm. The catalysed reaction is ATP + H2O + a folded polypeptide = ADP + phosphate + an unfolded polypeptide.. Functionally, together with its co-chaperonin GroES, plays an essential role in assisting protein folding. The GroEL-GroES system forms a nano-cage that allows encapsulation of the non-native substrate proteins and provides a physical environment optimized to promote and accelerate protein folding. The protein is Chaperonin GroEL of Chlorobium luteolum (strain DSM 273 / BCRC 81028 / 2530) (Pelodictyon luteolum).